The sequence spans 505 residues: Lysine--tRNA ligase (505 aa).

Glu-409 and Glu-416 together coordinate Mg(2+).

Belongs to the class-II aminoacyl-tRNA synthetase family. Homodimer. It depends on Mg(2+) as a cofactor.

The protein localises to the cytoplasm. The enzyme catalyses tRNA(Lys) + L-lysine + ATP = L-lysyl-tRNA(Lys) + AMP + diphosphate. The polypeptide is Lysine--tRNA ligase (Latilactobacillus sakei subsp. sakei (strain 23K) (Lactobacillus sakei subsp. sakei)).